The following is a 218-amino-acid chain: THAP domain-containing protein 3 (218 aa).

The segment at Met-1–Phe-82 adopts a THAP-type zinc-finger fold. 2 disordered regions span residues Gly-97 to Pro-120 and Ala-133 to Pro-154. Ser-100 bears the Phosphoserine mark. An HCFC1-binding motif (HBM) motif is present at residues Asp-156–Tyr-159.

In terms of assembly, component of a THAP1/THAP3-HCFC1-OGT complex that contains at least, either THAP1 or THAP3, HCFC1 and OGT. Interacts directly with OGT and HCFC1 (via its HBM). Highest levels in heart, liver and kidney. Lower levels in brain and lung.

In terms of biological role, component of a THAP1/THAP3-HCFC1-OGT complex that is required for the regulation of the transcriptional activity of RRM1. This Mus musculus (Mouse) protein is THAP domain-containing protein 3 (Thap3).